We begin with the raw amino-acid sequence, 341 residues long: Glycerol-3-phosphate dehydrogenase [NAD(P)+] (341 aa).

Ser-14, Phe-15, Arg-35, and Lys-108 together coordinate NADPH. Residues Lys-108 and Gly-136 each contribute to the sn-glycerol 3-phosphate site. Ala-140 contributes to the NADPH binding site. The sn-glycerol 3-phosphate site is built by Lys-191, Asp-244, Ser-254, Arg-255, and Asn-256. Residue Lys-191 is the Proton acceptor of the active site. Arg-255 is a binding site for NADPH. NADPH-binding residues include Val-279 and Glu-281.

Belongs to the NAD-dependent glycerol-3-phosphate dehydrogenase family.

It localises to the cytoplasm. It carries out the reaction sn-glycerol 3-phosphate + NAD(+) = dihydroxyacetone phosphate + NADH + H(+). It catalyses the reaction sn-glycerol 3-phosphate + NADP(+) = dihydroxyacetone phosphate + NADPH + H(+). Its pathway is membrane lipid metabolism; glycerophospholipid metabolism. Catalyzes the reduction of the glycolytic intermediate dihydroxyacetone phosphate (DHAP) to sn-glycerol 3-phosphate (G3P), the key precursor for phospholipid synthesis. In Pseudomonas putida (strain ATCC 47054 / DSM 6125 / CFBP 8728 / NCIMB 11950 / KT2440), this protein is Glycerol-3-phosphate dehydrogenase [NAD(P)+].